A 361-amino-acid polypeptide reads, in one-letter code: Chorismate synthase (361 aa).

NADP(+) contacts are provided by R48 and R54. FMN contacts are provided by residues 125–127, 238–239, G278, 293–297, and R319; these read RSS, NA, and KPTSS.

Belongs to the chorismate synthase family. Homotetramer. FMNH2 is required as a cofactor.

It carries out the reaction 5-O-(1-carboxyvinyl)-3-phosphoshikimate = chorismate + phosphate. The protein operates within metabolic intermediate biosynthesis; chorismate biosynthesis; chorismate from D-erythrose 4-phosphate and phosphoenolpyruvate: step 7/7. Functionally, catalyzes the anti-1,4-elimination of the C-3 phosphate and the C-6 proR hydrogen from 5-enolpyruvylshikimate-3-phosphate (EPSP) to yield chorismate, which is the branch point compound that serves as the starting substrate for the three terminal pathways of aromatic amino acid biosynthesis. This reaction introduces a second double bond into the aromatic ring system. The sequence is that of Chorismate synthase from Edwardsiella ictaluri (strain 93-146).